Reading from the N-terminus, the 1147-residue chain is MQGNREMKRLFVGGLGQGISETDLQNQFGRFGEVSDVEIITRKDDQGNSQKVFAYVNIQITEADLKKCMSILNKTKWKGGTLQIQLAKESFLHRLAQEREDAKAKKEKSTTGNPTLLEKMGAVDFHMKAVPGTEVPGHKNWVVSKFGRVLPVLHLKNQQKHKIMKYDPSKYCHNIKKIPENLTETTPIAELTWELEGGNDPMSKKRRGEFSDFHIPPQKVKKVQKSNDPMESKVSNIGLRTNQVMEKNKSTHPVTAHGTAPSTVNPSKQLLVSSSGTQKPKHVVFHNSDFEIIWNKSSMSDDDVDSEDELKMMIAKEENREKPGHSSVNESEHDTFEVVRDDFKSNIHKLSSSVSLGNNHEYDSSDTDEIIAMKTKNAKVKNSAESSQPERTVSKKSSFQKIEPSNDCIKVQGINSNKESALCHGVKFVNPKFPPDSSGSDSEESEEDEEYKVLMENCPRVSLTLADLEQLAGSHRKFPGKDSETNGPQNDSHCKFDTTSKNPKTSGDLYNGRQQCILPEEIVASLLEDENTYSKQKSEEDILKPKFQAFKGIGCLYAKESVDKTLKENIAFNTGGGHHSSLKHEDHNRSLMENGSKCVNGSSSKLTSCQPAKKVNDPNHIQPPKRQCTFENQNHKVMSSTSCDKGSTNPLPGPLPLKAKTSLHLSANSHKVDSDGDACHWPESRKALEKERTNLSNLESLEKSSKVSPREDPQKSPAGFSLSDSNASCINAKDKQAEDNQKRLAALAAWQKAREVQKKLVHSALANLDGHPEDKKTHIVFASDNESETEETSTQEQSCPEKELMKESVSKSPGKLFDSSDDEDSDSKEDSTRFSIKPQFEGRAGQKLMDLQSQFGSDERFRMDSRFLESDSEDEKKELNEDKVNEDELAAEKKKTLNVVQSVLNINVNNPTNKGSVAAKKFKDIVHYDPTKHDHAIYERKQEDKEKESKATRKKKKEEAEKLPEVSQDMYYNIAADLKEIFQSMSNTDEKEEDVPRTEAGAREGTGKIRNAETLACEPEQTTGFTFSFFDSATKDEKDATYRIELVKHGKIVCPNDPRFQDSSSEEEDIAEEADHSKPSPGEAVPENEAIRFFFFSENDDRLRGSNLFWSGMGGSISRNSWEARTSSLLLECRKKHKEAKRKVKAN.

Residues 8-89 (KRLFVGGLGQ…GTLQIQLAKE (82 aa)) form the RRM domain. Lysine 225 is covalently cross-linked (Glycyl lysine isopeptide (Lys-Gly) (interchain with G-Cter in SUMO2)). Serine 300 and serine 306 each carry phosphoserine. Lysine 316 participates in a covalent cross-link: Glycyl lysine isopeptide (Lys-Gly) (interchain with G-Cter in SUMO2). Tyrosine 362 carries the phosphotyrosine modification. Serine 364 and serine 365 each carry phosphoserine. Residue threonine 367 is modified to Phosphothreonine. The disordered stretch occupies residues 379–401 (KVKNSAESSQPERTVSKKSSFQK). Over residues 383-400 (SAESSQPERTVSKKSSFQ) the composition is skewed to polar residues. Serine 416 carries the post-translational modification Phosphoserine. 7 disordered regions span residues 427–452 (KFVN…EEYK), 472–511 (AGSH…DLYN), 592–659 (MENG…PLKA), 686–741 (KALE…EDNQ), 766–888 (ANLD…NEDE), 932–963 (KHDH…AEKL), and 986–1017 (SNTD…TLAC). Residues 441–450 (DSEESEEDEE) show a composition bias toward acidic residues. Polar residues-rich tracts occupy residues 592-610 (MENG…TSCQ) and 629-650 (TFEN…STNP). Composition is skewed to basic and acidic residues over residues 700 to 714 (SLEK…EDPQ) and 732 to 741 (AKDKQAEDNQ). Serine 704 is subject to Phosphoserine. Threonine 777 carries the post-translational modification Phosphothreonine. Phosphoserine occurs at positions 783 and 787. Over residues 799-809 (CPEKELMKESV) the composition is skewed to basic and acidic residues. 5 positions are modified to phosphoserine: serine 819, serine 820, serine 825, serine 827, and serine 872. Positions 857–883 (SDERFRMDSRFLESDSEDEKKELNEDK) are enriched in basic and acidic residues. Coiled coils occupy residues 868-898 (LESD…KTLN) and 937-963 (IYER…AEKL). Residues 994–1011 (DVPRTEAGAREGTGKIRN) are compositionally biased toward basic and acidic residues. Lysine 1038 is covalently cross-linked (Glycyl lysine isopeptide (Lys-Gly) (interchain with G-Cter in SUMO2)). Residues 1055–1086 (PNDPRFQDSSSEEEDIAEEADHSKPSPGEAVP) are disordered. Residues serine 1063, serine 1064, serine 1065, and serine 1080 each carry the phosphoserine modification.

In terms of assembly, interacts with the GTP form of RRAGA, RRAGC and RRAGD. Interacts with NIP7. Interacts with DDX18; the interaction is RNA-dependent. Interacts with DDX47; the interaction is RNA-dependent. In terms of processing, phosphorylated.

The protein localises to the nucleus. The protein resides in the nucleolus. Functionally, plays an essential role in the survival of diffuse-type gastric cancer cells. Acts as a nucleolar anchoring protein for DDX47. May be involved in regulation of gene expression at the post-transcriptional level or in ribosome biogenesis in cancer cells. The polypeptide is Nucleolar protein 8 (Mus musculus (Mouse)).